The following is a 716-amino-acid chain: Amino-acid acetyltransferase, mitochondrial (716 aa).

The transit peptide at 1–44 directs the protein to the mitochondrion; the sequence is MSLHTGWPRTVNSSFLKKHRSSLCTCQHTSSVLPRSFSTTPDRH. Over residues 37-56 the composition is skewed to polar residues; that stretch reads FSTTPDRHVQQSADFSSTSR. Disordered stretches follow at residues 37–58 and 96–121; these read FSTT…SRSY and KAQH…TLPS. Residues 101-112 are compositionally biased toward basic and acidic residues; it reads KSPDANKPEPEK. The N-acetyltransferase domain maps to 537–706; the sequence is SRPRLKLDDP…YEAVCRSIQP (170 aa).

This sequence belongs to the acetyltransferase family.

The protein resides in the mitochondrion. It catalyses the reaction L-glutamate + acetyl-CoA = N-acetyl-L-glutamate + CoA + H(+). It functions in the pathway amino-acid biosynthesis; L-arginine biosynthesis; N(2)-acetyl-L-ornithine from L-glutamate: step 1/4. Functionally, N-acetylglutamate synthase involved in arginine biosynthesis. This Aspergillus fumigatus (strain CBS 144.89 / FGSC A1163 / CEA10) (Neosartorya fumigata) protein is Amino-acid acetyltransferase, mitochondrial (arg2).